The primary structure comprises 393 residues: 4-hydroxyphenylpyruvate dioxygenase (393 aa).

The residue at position 2 (T2) is an N-acetylthreonine. VOC domains follow at residues 18-149 (HFHS…LVEK) and 180-338 (IIDH…IFTK). Position 132 is an N6-succinyllysine (K132). Position 183 (H183) interacts with Fe cation. S211, S226, and S250 each carry phosphoserine. Fe cation contacts are provided by H266 and E349.

This sequence belongs to the 4HPPD family. Homodimer. Fe cation serves as cofactor.

It is found in the cytoplasm. It localises to the endoplasmic reticulum membrane. The protein resides in the golgi apparatus membrane. The catalysed reaction is 3-(4-hydroxyphenyl)pyruvate + O2 = homogentisate + CO2. Its pathway is amino-acid degradation; L-phenylalanine degradation; acetoacetate and fumarate from L-phenylalanine: step 3/6. Functionally, catalyzes the conversion of 4-hydroxyphenylpyruvic acid to homogentisic acid, one of the steps in tyrosine catabolism. The chain is 4-hydroxyphenylpyruvate dioxygenase (HPD) from Bos taurus (Bovine).